The chain runs to 278 residues: Probable cytochrome c oxidase subunit 3 (278 aa).

6 consecutive transmembrane segments (helical) span residues 21–41 (PWPV…VSFM), 46–66 (FNIY…YSWW), 89–109 (IGMA…FASF), 174–194 (CVTA…MQAY), 212–232 (FYLA…FLIV), and 256–276 (AWYW…VYIF).

Belongs to the cytochrome c oxidase subunit 3 family.

The protein localises to the cell membrane. The enzyme catalyses 4 Fe(II)-[cytochrome c] + O2 + 8 H(+)(in) = 4 Fe(III)-[cytochrome c] + 2 H2O + 4 H(+)(out). The chain is Probable cytochrome c oxidase subunit 3 (ctaE) from Rickettsia felis (strain ATCC VR-1525 / URRWXCal2) (Rickettsia azadi).